A 623-amino-acid polypeptide reads, in one-letter code: uncharacterized protein (623 aa).

A coiled-coil region spans residues 256-351 (AEEKLLSKNK…EEIHGLKKKN (96 aa)). 2 disordered regions span residues 417–485 (NRRN…SPSS) and 497–536 (ALSS…ECAT). Residues 422 to 431 (LESVPFNTLS) are compositionally biased toward polar residues. Over residues 452–481 (ELKKPAESYGDETKKPNQHNKDGSIDEKPK) the composition is skewed to basic and acidic residues.

This is an uncharacterized protein from Arabidopsis thaliana (Mouse-ear cress).